The primary structure comprises 352 residues: Transcription factor MYB51 (352 aa).

HTH myb-type domains follow at residues 10-62 (ELGL…ANYL) and 63-117 (RPDI…KKRL). 2 consecutive DNA-binding regions (H-T-H motif) follow at residues 38-62 (WRTLPEKAGLKRCGKSCRLRWANYL) and 90-113 (WSAIARGLPGRTDNEIKNYWNTHI). 2 disordered regions span residues 128–157 (KGITSGTDKSENLPEKQNVNLTTSDHDLDN) and 198–219 (GGPLASTSHTTNTTTTSVSVDS). Positions 203–219 (STSHTTNTTTTSVSVDS) are enriched in low complexity.

In terms of assembly, can form complexes with MYC2, MYC3 or MYC4. In terms of tissue distribution, expressed in vegetative parts of the plant, mainly in mature rosette leaves and in trichomes. Detected in roots, but not in mature flowers or siliques.

The protein localises to the nucleus. Its function is as follows. Transcription factor positively regulating indolic glucosinolate biosynthetic pathway genes. This is Transcription factor MYB51 (MYB51) from Arabidopsis thaliana (Mouse-ear cress).